Consider the following 422-residue polypeptide: Phytoene synthase 1, chloroplastic (422 aa).

Residues 1-70 (MSSSVAVLWV…NRSRRIGVVS (70 aa)) constitute a chloroplast transit peptide.

The protein belongs to the phytoene/squalene synthase family. Monomer. Interacts with OR. Interacts with ORLIKE.

The protein localises to the plastid. The protein resides in the chloroplast membrane. It catalyses the reaction 2 (2E,6E,10E)-geranylgeranyl diphosphate = 15-cis-phytoene + 2 diphosphate. It participates in carotenoid biosynthesis; phytoene biosynthesis; all-trans-phytoene from geranylgeranyl diphosphate: step 1/1. Its function is as follows. Catalyzes the reaction from prephytoene diphosphate to phytoene. The chain is Phytoene synthase 1, chloroplastic from Arabidopsis thaliana (Mouse-ear cress).